Consider the following 192-residue polypeptide: tRNA (pseudouridine(54)-N(1))-methyltransferase (192 aa).

Positions 127 and 181 each coordinate S-adenosyl-L-methionine.

The protein belongs to the methyltransferase superfamily. TrmY family. Homodimer.

The protein resides in the cytoplasm. It carries out the reaction pseudouridine(54) in tRNA + S-adenosyl-L-methionine = N(1)-methylpseudouridine(54) in tRNA + S-adenosyl-L-homocysteine + H(+). Its function is as follows. Specifically catalyzes the N1-methylation of pseudouridine at position 54 (Psi54) in tRNAs. This is tRNA (pseudouridine(54)-N(1))-methyltransferase from Methanocella arvoryzae (strain DSM 22066 / NBRC 105507 / MRE50).